The sequence spans 218 residues: Ribose-5-phosphate isomerase A (218 aa).

Substrate contacts are provided by residues 27–30, 80–83, and 93–96; these read TGST, DGAD, and KGGG. Residue Glu-102 is the Proton acceptor of the active site. Residue Lys-120 participates in substrate binding.

It belongs to the ribose 5-phosphate isomerase family. Homodimer.

It carries out the reaction aldehydo-D-ribose 5-phosphate = D-ribulose 5-phosphate. It functions in the pathway carbohydrate degradation; pentose phosphate pathway; D-ribose 5-phosphate from D-ribulose 5-phosphate (non-oxidative stage): step 1/1. Catalyzes the reversible conversion of ribose-5-phosphate to ribulose 5-phosphate. The protein is Ribose-5-phosphate isomerase A of Thiobacillus denitrificans (strain ATCC 25259 / T1).